A 190-amino-acid polypeptide reads, in one-letter code: Hypoxanthine/guanine phosphoribosyltransferase (190 aa).

It belongs to the purine/pyrimidine phosphoribosyltransferase family. Archaeal HPRT subfamily. In terms of assembly, homodimer.

Its subcellular location is the cytoplasm. It carries out the reaction IMP + diphosphate = hypoxanthine + 5-phospho-alpha-D-ribose 1-diphosphate. The enzyme catalyses GMP + diphosphate = guanine + 5-phospho-alpha-D-ribose 1-diphosphate. The protein operates within purine metabolism; IMP biosynthesis via salvage pathway; IMP from hypoxanthine: step 1/1. Catalyzes a salvage reaction resulting in the formation of IMP that is energically less costly than de novo synthesis. This Methanosarcina barkeri (strain Fusaro / DSM 804) protein is Hypoxanthine/guanine phosphoribosyltransferase.